We begin with the raw amino-acid sequence, 85 residues long: U4-theraphotoxin-Hhn1a (85 aa).

Residues 1-22 form the signal peptide; sequence MKVTLIAILTCAAVLVLHTTAE. Positions 23 to 48 are excised as a propeptide; that stretch reads EELEAESQLMEVGMPDTELAAVDEER. Intrachain disulfides connect Cys-52/Cys-66, Cys-56/Cys-77, and Cys-71/Cys-82.

Belongs to the neurotoxin 12 (Hwtx-2) family. 02 (Hwtx-2) subfamily. Monomer. As to expression, expressed by the venom gland.

It is found in the secreted. In terms of biological role, neurotoxin active on both insects and mammals. In Cyriopagopus hainanus (Chinese bird spider), this protein is U4-theraphotoxin-Hhn1a.